Here is a 291-residue protein sequence, read N- to C-terminus: tRNA dimethylallyltransferase (291 aa).

Residue 8 to 15 coordinates ATP; the sequence is GSTASGKT. 10–15 is a binding site for substrate; it reads TASGKT. The interval 33–36 is interaction with substrate tRNA; sequence DSLC.

It belongs to the IPP transferase family. In terms of assembly, monomer. The cofactor is Mg(2+).

It carries out the reaction adenosine(37) in tRNA + dimethylallyl diphosphate = N(6)-dimethylallyladenosine(37) in tRNA + diphosphate. In terms of biological role, catalyzes the transfer of a dimethylallyl group onto the adenine at position 37 in tRNAs that read codons beginning with uridine, leading to the formation of N6-(dimethylallyl)adenosine (i(6)A). This Aliarcobacter butzleri (strain RM4018) (Arcobacter butzleri) protein is tRNA dimethylallyltransferase.